The sequence spans 2103 residues: Zinc finger SWIM domain-containing protein 8 homolog (2103 aa).

The SWIM-type zinc-finger motif lies at 191–227 (FNVAVTFDRRRISSCNCTCTSSAYWCSHVVAVCLHRI). Disordered regions lie at residues 684 to 860 (DGNR…GSTA), 1237 to 1262 (SSNP…GGSG), 1310 to 1399 (SSGS…IPNQ), 1735 to 1772 (MQMF…QVVQ), 1786 to 1864 (QQVQ…GVGV), and 1888 to 1916 (PFMQ…RQPH). Over residues 724 to 740 (SALTESDSQSSFDAVSH) the composition is skewed to polar residues. Composition is skewed to low complexity over residues 754-789 (AVGV…STSS) and 835-857 (GRVA…VGSG). Residues 1237-1249 (SSNPPVRTRSNQP) show a composition bias toward polar residues. The segment covering 1320–1351 (GMVPTTNAAGTTGTPSSSSTTVSGSQNPNGNP) has biased composition (low complexity). Gly residues predominate over residues 1352–1377 (SGSGGGGNGGGGNGGGGGGGGGGGGS). The segment covering 1755–1764 (QPPPQQPPNP) has biased composition (pro residues). 2 stretches are compositionally biased toward low complexity: residues 1786–1813 (QQVQ…SGFQ) and 1820–1835 (AFQA…MQAG). Pro residues-rich tracts occupy residues 1836-1859 (PPGP…PNGP) and 1894-1908 (PPQP…PSQP).

The protein belongs to the ZSWIM8 family. As to quaternary structure, component of the SCF-like E3 ubiquitin-protein ligase complex.

The protein operates within protein modification; protein ubiquitination. Substrate recognition component of a SCF-like E3 ubiquitin-protein ligase complex that promotes target-directed microRNA degradation (TDMD), a process that mediates degradation of microRNAs (miRNAs). The SCF-like E3 ubiquitin-protein ligase complex acts by catalyzing ubiquitination and subsequent degradation of AGO1, thereby exposing miRNAs for degradation. This is Zinc finger SWIM domain-containing protein 8 homolog from Drosophila melanogaster (Fruit fly).